We begin with the raw amino-acid sequence, 214 residues long: Pyridoxine/pyridoxamine 5'-phosphate oxidase (214 aa).

Residues 9–12 (RKNY) and Lys67 contribute to the substrate site. FMN contacts are provided by residues 62–67 (RIVLLK), 77–78 (YT), Lys83, Lys84, and Gln106. Residues Tyr124, Arg128, and Ser132 each coordinate substrate. Residues 141–142 (QS) and Trp186 contribute to the FMN site. 192–194 (RLH) provides a ligand contact to substrate. Residue Arg196 coordinates FMN.

The protein belongs to the pyridoxamine 5'-phosphate oxidase family. Homodimer. FMN is required as a cofactor.

The catalysed reaction is pyridoxamine 5'-phosphate + O2 + H2O = pyridoxal 5'-phosphate + H2O2 + NH4(+). It catalyses the reaction pyridoxine 5'-phosphate + O2 = pyridoxal 5'-phosphate + H2O2. It functions in the pathway cofactor metabolism; pyridoxal 5'-phosphate salvage; pyridoxal 5'-phosphate from pyridoxamine 5'-phosphate: step 1/1. Its pathway is cofactor metabolism; pyridoxal 5'-phosphate salvage; pyridoxal 5'-phosphate from pyridoxine 5'-phosphate: step 1/1. Its function is as follows. Catalyzes the oxidation of either pyridoxine 5'-phosphate (PNP) or pyridoxamine 5'-phosphate (PMP) into pyridoxal 5'-phosphate (PLP). This is Pyridoxine/pyridoxamine 5'-phosphate oxidase from Leptospira borgpetersenii serovar Hardjo-bovis (strain JB197).